The primary structure comprises 118 residues: Eukaryotic translation initiation factor 4E-binding protein 1 (118 aa).

Ser2 carries the post-translational modification N-acetylserine. Residues Val27–Gly48 form a disordered region. The segment covering Tyr34 to Gly48 has biased composition (polar residues). The residue at position 37 (Thr37) is a Phosphothreonine; by MTOR. Position 41 is a phosphothreonine (Thr41). Ser44 is subject to Phosphoserine. Position 46 is a phosphothreonine; by MTOR (Thr46). Phosphothreonine is present on Thr50. Phosphotyrosine is present on Tyr54. The short motif at Tyr54–Met60 is the YXXXXLphi motif element. A Glycyl lysine isopeptide (Lys-Gly) (interchain with G-Cter in ubiquitin) cross-link involves residue Lys57. A disordered region spans residues Asn64–Ile118. Ser65 is modified (phosphoserine; by DYRK2, MAPK1, MAPK3 and MTOR). Thr70 bears the Phosphothreonine; by MTOR mark. Thr77 is modified (phosphothreonine). A phosphoserine mark is found at Ser83 and Ser100. Phosphoserine; by DYRK2 is present on Ser101. Ser112 is subject to Phosphoserine. Positions Phe114–Ile118 match the TOS motif motif.

This sequence belongs to the eIF4E-binding protein family. As to quaternary structure, hypophosphorylated EIF4EBP1 competes with EIF4G1/EIF4G3 to interact with EIF4E; insulin stimulated MAP-kinase (MAPK1 and MAPK3) or mTORC1 phosphorylation of EIF4EBP1 causes dissociation of the complex allowing EIF4G1/EIF4G3 to bind and consequent initiation of translation. Interacts (via TOS motif) with RPTOR; promoting phosphorylation by mTORC1. In terms of processing, phosphorylated on serine and threonine residues in response to insulin, EGF and PDGF. Phosphorylation at Thr-37, Thr-46, Ser-65 and Thr-70, corresponding to the hyperphosphorylated form, is regulated by mTORC1 and abolishes binding to EIF4E. Post-translationally, ubiquitinated: when eIF4E levels are low, hypophosphorylated form is ubiquitinated by the BCR(KLHL25) complex, leading to its degradation and serving as a homeostatic mechanism to maintain translation and prevent eIF4E inhibition when eIF4E levels are low. Not ubiquitinated when hyperphosphorylated (at Thr-37, Thr-46, Ser-65 and Thr-70) or associated with eIF4E.

It localises to the cytoplasm. It is found in the nucleus. Repressor of translation initiation that regulates EIF4E activity by preventing its assembly into the eIF4F complex: hypophosphorylated form competes with EIF4G1/EIF4G3 and strongly binds to EIF4E, leading to repress translation. In contrast, hyperphosphorylated form dissociates from EIF4E, allowing interaction between EIF4G1/EIF4G3 and EIF4E, leading to initiation of translation. Mediates the regulation of protein translation by hormones, growth factors and other stimuli that signal through the MAP kinase and mTORC1 pathways. This Bos taurus (Bovine) protein is Eukaryotic translation initiation factor 4E-binding protein 1 (EIF4EBP1).